We begin with the raw amino-acid sequence, 80 residues long: CDC42 small effector protein 1 (80 aa).

Residues cysteine 10 and cysteine 11 are each lipidated (S-palmitoyl cysteine). A CRIB domain is found at 30-43; that stretch reads IGEPMNFVHLTHIG. Positions 48 to 80 are disordered; that stretch reads GAGDGLAMTGAVQEQMRSKGNHRDRPWSNSRAL.

Belongs to the CDC42SE/SPEC family. As to quaternary structure, interacts with CDC42 (in GTP-bound form). Interacts weakly with RAC1 and not at all with RHOA.

Its subcellular location is the cytoplasm. The protein localises to the cytoskeleton. It is found in the cell membrane. Its function is as follows. Probably involved in the organization of the actin cytoskeleton by acting downstream of CDC42, inducing actin filament assembly. Alters CDC42-induced cell shape changes. In activated T-cells, may play a role in CDC42-mediated F-actin accumulation at the immunological synapse. May play a role in early contractile events in phagocytosis in macrophages. The polypeptide is CDC42 small effector protein 1 (Cdc42se1) (Mus musculus (Mouse)).